The following is a 217-amino-acid chain: Large ribosomal subunit protein uL3 (217 aa).

Positions 134 to 146 are enriched in polar residues; the sequence is GRATHGNSRSHNV. Residues 134 to 154 form a disordered region; sequence GRATHGNSRSHNVPGSIGMAQ. The residue at position 154 (Gln-154) is an N5-methylglutamine.

The protein belongs to the universal ribosomal protein uL3 family. Part of the 50S ribosomal subunit. Forms a cluster with proteins L14 and L19. Post-translationally, methylated by PrmB.

One of the primary rRNA binding proteins, it binds directly near the 3'-end of the 23S rRNA, where it nucleates assembly of the 50S subunit. The sequence is that of Large ribosomal subunit protein uL3 from Burkholderia cenocepacia (strain HI2424).